We begin with the raw amino-acid sequence, 353 residues long: Basic membrane protein C (353 aa).

The N-terminal stretch at 1–16 (MFKRFIFITLSLLVFA) is a signal peptide. Cys-17 is lipidated: N-palmitoyl cysteine. The S-diacylglycerol cysteine moiety is linked to residue Cys-17.

The protein belongs to the BMP lipoprotein family. In terms of assembly, monomer.

The protein resides in the cell inner membrane. In terms of biological role, may be part of an ABC-type nucleoside uptake system involved in the purine salvage pathway. The polypeptide is Basic membrane protein C (bmpC) (Borreliella burgdorferi (strain N40) (Borrelia burgdorferi)).